A 308-amino-acid polypeptide reads, in one-letter code: MNPIVVVHGGGAGPISKDRKERMHQGIVRAATVGYGILREGGSAVDAVEGAVVALEDDPEFNAGCGSVLNTDGEVEMDASIMDGKDLSVGAVSAVRCIANPIKLARLVMEKTPHCFLTDQGAAQFAAAMGVPEIPGEKLVTEKNKKRLEKEKHEKGAQKTDCEKNLGTVGAVALDFKGNVAYATSTGGIVNKMVGRVGDTPCVGAGGYADNDIGAISTTGHGESILKVNLARLTLFHIEQGKTVEEAADLSLGYMKSRVKGLGGLIVVSKTGDWVAKWTSTSMPWAAAKDGKLHFGIDPDDTAITDLP.

The residue at position 1 (Met-1) is an N-acetylmethionine. The active-site Nucleophile is the Thr-168. Residues 196-199 (RVGD) and 219-222 (TGHG) contribute to the substrate site.

This sequence belongs to the Ntn-hydrolase family. In terms of assembly, heterodimer of an alpha and beta chain produced by autocleavage. This heterodimer may then dimerize in turn, giving rise to a heterotetramer. Cleaved into an alpha and beta chain by autocatalysis; this activates the enzyme. The N-terminal residue of the beta subunit is responsible for the nucleophile hydrolase activity.

Its subcellular location is the cytoplasm. It carries out the reaction L-asparagine + H2O = L-aspartate + NH4(+). It catalyses the reaction Cleavage of a beta-linked Asp residue from the N-terminus of a polypeptide.. Its function is as follows. Has both L-asparaginase and beta-aspartyl peptidase activity. May be involved in the production of L-aspartate, which can act as an excitatory neurotransmitter in some brain regions. Is highly active with L-Asp beta-methyl ester. Besides, has catalytic activity toward beta-aspartyl dipeptides and their methyl esters, including beta-L-Asp-L-Phe, beta-L-Asp-L-Phe methyl ester (aspartame), beta-L-Asp-L-Ala, beta-L-Asp-L-Leu and beta-L-Asp-L-Lys. Does not have aspartylglucosaminidase activity and is inactive toward GlcNAc-L-Asn. Likewise, has no activity toward glutamine. The polypeptide is Isoaspartyl peptidase/L-asparaginase (ASRGL1) (Macaca fascicularis (Crab-eating macaque)).